The primary structure comprises 249 residues: Type III pantothenate kinase (249 aa).

Residue 6–13 participates in ATP binding; that stretch reads DCGNSLIK. Substrate is bound by residues Y93 and 100-103; that span reads GLDR. Catalysis depends on D102, which acts as the Proton acceptor. Residue D122 coordinates K(+). Residue T125 participates in ATP binding. T181 contributes to the substrate binding site.

The protein belongs to the type III pantothenate kinase family. In terms of assembly, homodimer. Requires NH4(+) as cofactor. K(+) serves as cofactor.

Its subcellular location is the cytoplasm. It carries out the reaction (R)-pantothenate + ATP = (R)-4'-phosphopantothenate + ADP + H(+). The protein operates within cofactor biosynthesis; coenzyme A biosynthesis; CoA from (R)-pantothenate: step 1/5. Its function is as follows. Catalyzes the phosphorylation of pantothenate (Pan), the first step in CoA biosynthesis. In Pseudomonas paraeruginosa (strain DSM 24068 / PA7) (Pseudomonas aeruginosa (strain PA7)), this protein is Type III pantothenate kinase.